Consider the following 356-residue polypeptide: Cyclin-D2-2 (356 aa).

Polar residues predominate over residues 325 to 343 (LGSSQSNSNNKDYNSQDSA). The disordered stretch occupies residues 325 to 356 (LGSSQSNSNNKDYNSQDSAPASKRRRLNTTPI). Residues 346–356 (SKRRRLNTTPI) are compositionally biased toward basic residues.

Belongs to the cyclin family. Cyclin D subfamily.

The sequence is that of Cyclin-D2-2 (CYCD2-2) from Oryza sativa subsp. japonica (Rice).